A 227-amino-acid polypeptide reads, in one-letter code: Cytidylate kinase (227 aa).

G12 to T20 lines the ATP pocket.

This sequence belongs to the cytidylate kinase family. Type 1 subfamily.

It is found in the cytoplasm. The catalysed reaction is CMP + ATP = CDP + ADP. It catalyses the reaction dCMP + ATP = dCDP + ADP. The polypeptide is Cytidylate kinase (Shigella flexneri).